We begin with the raw amino-acid sequence, 400 residues long: Pyruvate dehydrogenase E1 component subunit beta-4, chloroplastic (400 aa).

The tract at residues 1–34 (MAAASSLHAAPRVGSSSSFSSSSSAGRRSASAAR) is disordered. The transit peptide at 1–57 (MAAASSLHAAPRVGSSSSFSSSSSAGRRSASAARSVRVAAAAGSCAARRAGGRMVAR) directs the protein to the chloroplast. The span at 9 to 34 (AAPRVGSSSSFSSSSSAGRRSASAAR) shows a compositional bias: low complexity. E136 is a thiamine diphosphate binding site. Residues I189, A237, I238, and N242 each contribute to the K(+) site.

Tetramer of 2 alpha and 2 beta subunits. The cofactor is thiamine diphosphate.

It localises to the plastid. The protein localises to the chloroplast. It catalyses the reaction N(6)-[(R)-lipoyl]-L-lysyl-[protein] + pyruvate + H(+) = N(6)-[(R)-S(8)-acetyldihydrolipoyl]-L-lysyl-[protein] + CO2. Its function is as follows. The pyruvate dehydrogenase complex catalyzes the overall conversion of pyruvate to acetyl-CoA and CO(2). It contains multiple copies of three enzymatic components: pyruvate dehydrogenase (E1), dihydrolipoamide acetyltransferase (E2) and lipoamide dehydrogenase (E3). In Oryza sativa subsp. japonica (Rice), this protein is Pyruvate dehydrogenase E1 component subunit beta-4, chloroplastic.